A 494-amino-acid chain; its full sequence is Cytochrome P450 2G1 (494 aa).

Residue C439 participates in heme binding.

This sequence belongs to the cytochrome P450 family. Heme serves as cofactor. Olfactory epithelium.

The protein resides in the endoplasmic reticulum membrane. The protein localises to the microsome membrane. It carries out the reaction an organic molecule + reduced [NADPH--hemoprotein reductase] + O2 = an alcohol + oxidized [NADPH--hemoprotein reductase] + H2O + H(+). Functionally, cytochromes P450 are a group of heme-thiolate monooxygenases. This isozyme seems to be implicated in olfaction. The sequence is that of Cytochrome P450 2G1 (CYP2G1) from Oryctolagus cuniculus (Rabbit).